The chain runs to 56 residues: Large ribosomal subunit protein bL33 (56 aa).

Belongs to the bacterial ribosomal protein bL33 family.

The chain is Large ribosomal subunit protein bL33 from Acidovorax sp. (strain JS42).